We begin with the raw amino-acid sequence, 474 residues long: tRNA-2-methylthio-N(6)-dimethylallyladenosine synthase (474 aa).

Residues 3 to 120 (QKLHIKTWGC…LPEMINQIRG (118 aa)) enclose the MTTase N-terminal domain. The [4Fe-4S] cluster site is built by Cys-12, Cys-49, Cys-83, Cys-157, Cys-161, and Cys-164. The Radical SAM core domain maps to 143-375 (KAEGPTAFVS…QQRINNQAAK (233 aa)). One can recognise a TRAM domain in the interval 378–441 (RAMLGTEQRV…TNSLRGDVIR (64 aa)).

The protein belongs to the methylthiotransferase family. MiaB subfamily. Monomer. The cofactor is [4Fe-4S] cluster.

It is found in the cytoplasm. It carries out the reaction N(6)-dimethylallyladenosine(37) in tRNA + (sulfur carrier)-SH + AH2 + 2 S-adenosyl-L-methionine = 2-methylsulfanyl-N(6)-dimethylallyladenosine(37) in tRNA + (sulfur carrier)-H + 5'-deoxyadenosine + L-methionine + A + S-adenosyl-L-homocysteine + 2 H(+). Catalyzes the methylthiolation of N6-(dimethylallyl)adenosine (i(6)A), leading to the formation of 2-methylthio-N6-(dimethylallyl)adenosine (ms(2)i(6)A) at position 37 in tRNAs that read codons beginning with uridine. This chain is tRNA-2-methylthio-N(6)-dimethylallyladenosine synthase, found in Actinobacillus succinogenes (strain ATCC 55618 / DSM 22257 / CCUG 43843 / 130Z).